The sequence spans 892 residues: Translation initiation factor IF-2 (892 aa).

A disordered region spans residues 65-296 (KTRSTLNIPS…KGKRKPSTLQ (232 aa)). Polar residues predominate over residues 68–82 (STLNIPSTGGKSKSV). Residues 99–217 (EQAKAEEQAQ…KMAAENEGKW (119 aa)) are compositionally biased toward basic and acidic residues. The segment covering 224–237 (QTESADYHVTTSQH) has biased composition (polar residues). Positions 239-254 (RAAEDENDAKVEGDRR) are enriched in basic and acidic residues. Positions 255–269 (SRTRGGKATKQKKGN) are enriched in basic residues. Residues 270–283 (KLSESKADREEARA) are compositionally biased toward basic and acidic residues. The tr-type G domain maps to 391–560 (HRAPVVTIMG…LLQAEVLELK (170 aa)). A G1 region spans residues 400 to 407 (GHVDHGKT). 400-407 (GHVDHGKT) is a binding site for GTP. Positions 425–429 (GITQH) are G2. The segment at 446 to 449 (DTPG) is G3. GTP is bound by residues 446–450 (DTPGH) and 500–503 (NKID). The G4 stretch occupies residues 500–503 (NKID). Positions 536–538 (SAK) are G5.

This sequence belongs to the TRAFAC class translation factor GTPase superfamily. Classic translation factor GTPase family. IF-2 subfamily.

It is found in the cytoplasm. One of the essential components for the initiation of protein synthesis. Protects formylmethionyl-tRNA from spontaneous hydrolysis and promotes its binding to the 30S ribosomal subunits. Also involved in the hydrolysis of GTP during the formation of the 70S ribosomal complex. The chain is Translation initiation factor IF-2 from Yersinia pseudotuberculosis serotype O:1b (strain IP 31758).